The following is a 934-amino-acid chain: Protein translocase subunit SecA (934 aa).

ATP contacts are provided by residues glutamine 87, 105-109 (GEGKT), and aspartate 515. Zn(2+) contacts are provided by cysteine 918, cysteine 920, cysteine 929, and histidine 930.

This sequence belongs to the SecA family. Monomer and homodimer. Part of the essential Sec protein translocation apparatus which comprises SecA, SecYEG and auxiliary proteins SecDF-YajC and YidC. Zn(2+) is required as a cofactor.

Its subcellular location is the cell inner membrane. The protein localises to the cytoplasm. The catalysed reaction is ATP + H2O + cellular proteinSide 1 = ADP + phosphate + cellular proteinSide 2.. In terms of biological role, part of the Sec protein translocase complex. Interacts with the SecYEG preprotein conducting channel. Has a central role in coupling the hydrolysis of ATP to the transfer of proteins into and across the cell membrane, serving both as a receptor for the preprotein-SecB complex and as an ATP-driven molecular motor driving the stepwise translocation of polypeptide chains across the membrane. In Ralstonia nicotianae (strain ATCC BAA-1114 / GMI1000) (Ralstonia solanacearum), this protein is Protein translocase subunit SecA.